Consider the following 92-residue polypeptide: DNA-directed RNA polymerase subunit omega (92 aa).

This sequence belongs to the RNA polymerase subunit omega family. The RNAP catalytic core consists of 2 alpha, 1 beta, 1 beta' and 1 omega subunit. When a sigma factor is associated with the core the holoenzyme is formed, which can initiate transcription.

It catalyses the reaction RNA(n) + a ribonucleoside 5'-triphosphate = RNA(n+1) + diphosphate. Functionally, promotes RNA polymerase assembly. Latches the N- and C-terminal regions of the beta' subunit thereby facilitating its interaction with the beta and alpha subunits. The protein is DNA-directed RNA polymerase subunit omega of Shewanella baltica (strain OS223).